Reading from the N-terminus, the 410-residue chain is Arginine deiminase (410 aa).

The active-site Amidino-cysteine intermediate is cysteine 400.

Belongs to the arginine deiminase family.

It is found in the cytoplasm. It catalyses the reaction L-arginine + H2O = L-citrulline + NH4(+). Its pathway is amino-acid degradation; L-arginine degradation via ADI pathway; carbamoyl phosphate from L-arginine: step 1/2. The sequence is that of Arginine deiminase from Bacillus cereus (strain ATCC 10987 / NRS 248).